The following is a 606-amino-acid chain: Chaperone protein DnaK (606 aa).

Thr174 is modified (phosphothreonine; by autocatalysis). The tract at residues 576–606 (QAAGSANPGGSQGTSQGNVYEADYKVEDDNK) is disordered. The segment covering 597–606 (ADYKVEDDNK) has biased composition (basic and acidic residues).

The protein belongs to the heat shock protein 70 family.

Functionally, acts as a chaperone. The polypeptide is Chaperone protein DnaK (Caldanaerobacter subterraneus subsp. tengcongensis (strain DSM 15242 / JCM 11007 / NBRC 100824 / MB4) (Thermoanaerobacter tengcongensis)).